A 159-amino-acid chain; its full sequence is Ribosomal RNA large subunit methyltransferase H (159 aa).

Residues L76, G108, and 127–132 contribute to the S-adenosyl-L-methionine site; that span reads FSKMTF.

It belongs to the RNA methyltransferase RlmH family. Homodimer.

It localises to the cytoplasm. It catalyses the reaction pseudouridine(1915) in 23S rRNA + S-adenosyl-L-methionine = N(3)-methylpseudouridine(1915) in 23S rRNA + S-adenosyl-L-homocysteine + H(+). Functionally, specifically methylates the pseudouridine at position 1915 (m3Psi1915) in 23S rRNA. In Staphylococcus carnosus (strain TM300), this protein is Ribosomal RNA large subunit methyltransferase H.